The chain runs to 335 residues: Fructose-1,6-bisphosphatase class 1 (335 aa).

E92, D115, L117, and D118 together coordinate Mg(2+). Residues 118–121 (DGSS), N211, Y244, 262–264 (YLY), and K274 contribute to the substrate site. Position 280 (E280) interacts with Mg(2+).

It belongs to the FBPase class 1 family. In terms of assembly, homotetramer. The cofactor is Mg(2+).

It localises to the cytoplasm. The catalysed reaction is beta-D-fructose 1,6-bisphosphate + H2O = beta-D-fructose 6-phosphate + phosphate. It participates in carbohydrate biosynthesis; gluconeogenesis. The protein is Fructose-1,6-bisphosphatase class 1 of Teredinibacter turnerae (strain ATCC 39867 / T7901).